Here is a 550-residue protein sequence, read N- to C-terminus: Arginine--tRNA ligase (550 aa).

Positions 130–140 match the 'HIGH' region motif; it reads ANPTGPIHIGG.

Belongs to the class-I aminoacyl-tRNA synthetase family. Monomer.

Its subcellular location is the cytoplasm. The enzyme catalyses tRNA(Arg) + L-arginine + ATP = L-arginyl-tRNA(Arg) + AMP + diphosphate. The polypeptide is Arginine--tRNA ligase (Mycobacterium sp. (strain JLS)).